The primary structure comprises 228 residues: Max-interacting protein 1 (228 aa).

Disordered stretches follow at residues 29–76 and 162–228; these read GYAS…NELE and GSTI…SFTS. Basic residues predominate over residues 43 to 56; the sequence is QHSKPPRRLSRAQK. Polar residues predominate over residues 57-70; sequence HSSGSSNTSTANRS. Positions 67–119 constitute a bHLH domain; that stretch reads ANRSTHNELEKNRRAHLRLCLERLKVLIPLGPDCTRHTTLGLLNKAKAHIKKL. The segment covering 173-183 has biased composition (acidic residues); it reads EREEIEVDVES. Over residues 216 to 228 the composition is skewed to polar residues; that stretch reads GYSSASVKLSFTS.

Efficient DNA binding requires dimerization with another bHLH protein. Binds DNA as a heterodimer with MAX. Interacts with SMC3. Interacts with RNF17.

It is found in the nucleus. Transcriptional repressor. MXI1 binds with MAX to form a sequence-specific DNA-binding protein complex which recognizes the core sequence 5'-CAC[GA]TG-3'. MXI1 thus antagonizes MYC transcriptional activity by competing for MAX. This chain is Max-interacting protein 1 (Mxi1), found in Rattus norvegicus (Rat).